We begin with the raw amino-acid sequence, 842 residues long: CRM-domain containing factor CFM3, chloroplastic/mitochondrial (842 aa).

The transit peptide at 1 to 82 directs the protein to the chloroplast and mitochondrion; sequence MAMASSPACH…RSSGRSTMSL (82 aa). Disordered stretches follow at residues 49–80, 141–160, and 254–290; these read AALDLRPEPSPSSDSDDEDAVGASRSSGRSTM, RFPWERPMPPPEAAPRSARS, and VDYDEPEPTKKSKKNSQSLAMDFPIKGSSNPSLLPTE. Residues 167–263 enclose the CRM 1 domain; the sequence is LTLPAAELRR…VDYDEPEPTK (97 aa). The span at 280–290 shows a compositional bias: polar residues; the sequence is GSSNPSLLPTE. CRM domains are found at residues 371–468 and 582–682; these read PSLS…ELAE and ETIT…SSLR. Residues 703 to 732 adopt a coiled-coil conformation; it reads QALSRHFAKLNRKVERLKAELVQMEDVKEQ. The segment at 768-842 is disordered; the sequence is VAGATADDDG…DRRNHDVNEY (75 aa). Over residues 786–812 the composition is skewed to acidic residues; that stretch reads DEADYPDSDDEAGDCSEDEGEDDEDEA. Residues 831–842 show a composition bias toward basic and acidic residues; that stretch reads DTDRRNHDVNEY.

Interacts with RNA. Part of large ribonucleo-protein particles that contain CAF1 and/or CAF2, and RNC1.

Its subcellular location is the plastid. The protein localises to the chloroplast stroma. It localises to the mitochondrion. Binds specific group II introns in chloroplasts and facilitates their splicing. Acts on subgroup IIB introns. The substrates of the subgroup IIB also require the CRM domain proteins CAF1 or CAF2, with a simultaneous binding of CFM3 and CAF1 or CAF2. May influence the biogenesis of the mitochondrial small ribosomal subunit. In Zea mays (Maize), this protein is CRM-domain containing factor CFM3, chloroplastic/mitochondrial.